A 157-amino-acid polypeptide reads, in one-letter code: UPF0225 protein PA14_50900 (157 aa).

The protein belongs to the UPF0225 family.

This Pseudomonas aeruginosa (strain UCBPP-PA14) protein is UPF0225 protein PA14_50900.